Consider the following 97-residue polypeptide: Large ribosomal subunit protein bL28 (97 aa).

This sequence belongs to the bacterial ribosomal protein bL28 family.

This Nitrobacter winogradskyi (strain ATCC 25391 / DSM 10237 / CIP 104748 / NCIMB 11846 / Nb-255) protein is Large ribosomal subunit protein bL28.